Reading from the N-terminus, the 209-residue chain is uncharacterized protein (209 aa).

2 disordered regions span residues 1–80 (MFVR…PPVE) and 164–197 (LPAG…PGME). The segment covering 178 to 189 (SRGSSRSSCSQR) has biased composition (low complexity).

This is an uncharacterized protein from Homo sapiens (Human).